A 226-amino-acid chain; its full sequence is Gap junction beta-2 protein (226 aa).

Residues 2–13 (DWGALQTILGGV) lie within the membrane without spanning it. Topologically, residues 14 to 20 (NKYSTSI) are cytoplasmic. Residues 21–40 (GKIWLTVLFIFRIMILVVAA) form a helical membrane-spanning segment. Topologically, residues 41–73 (KEVWGDEQADFVCNTLQPGCKNVCYDHYFPISH) are extracellular. 3 residues coordinate Ca(2+): glutamate 42, glycine 45, and glutamate 47. 3 cysteine pairs are disulfide-bonded: cysteine 53/cysteine 180, cysteine 60/cysteine 174, and cysteine 64/cysteine 169. The helical transmembrane segment at 74–94 (IRLWALQLIFVSTPALLVAMH) threads the bilayer. Topologically, residues 95-135 (VAYRRHEKKRKFIKGEIKNEFKDIEEIKTQKVRIEGSLWWT) are cytoplasmic. The chain crosses the membrane as a helical span at residues 136–156 (YTSSIFFRVVFEAAFMYVFYV). Over 157 to 189 (MYDGFSMQRLVKCNAWPCPNTVDCFVSRPTEKT) the chain is Extracellular. The chain crosses the membrane as a helical span at residues 190-210 (VFTVFMIAVSGICILLNVTEL). Residues 211–226 (CYLLIRYCSGKSKKPV) are Cytoplasmic-facing.

This sequence belongs to the connexin family. Beta-type (group I) subfamily. As to quaternary structure, a hemichannel or connexon is composed of a hexamer of connexins. A functional gap junction is formed by the apposition of two hemichannels. Forms heteromeric channels with GJB4. Interacts with CNST.

It is found in the cell membrane. The protein localises to the cell junction. Its subcellular location is the gap junction. Structural component of gap junctions. Gap junctions are dodecameric channels that connect the cytoplasm of adjoining cells. They are formed by the docking of two hexameric hemichannels, one from each cell membrane. Small molecules and ions diffuse from one cell to a neighboring cell via the central pore. The polypeptide is Gap junction beta-2 protein (GJB2) (Macaca mulatta (Rhesus macaque)).